We begin with the raw amino-acid sequence, 130 residues long: Small ribosomal subunit protein uS8 (130 aa).

The protein belongs to the universal ribosomal protein uS8 family. In terms of assembly, part of the 30S ribosomal subunit.

In terms of biological role, one of the primary rRNA binding proteins, it binds directly to 16S rRNA central domain where it helps coordinate assembly of the platform of the 30S subunit. The polypeptide is Small ribosomal subunit protein uS8 (Nitrosopumilus maritimus (strain SCM1)).